The sequence spans 356 residues: Neutral protease 2 homolog MEP5 (356 aa).

The first 19 residues, 1–19 (MRVSSSLIALAALAVQALA), serve as a signal peptide directing secretion. A propeptide spanning residues 20 to 179 (LPVNELAERD…ASAIPELDKR (160 aa)) is cleaved from the precursor. Disulfide bonds link cysteine 187–cysteine 259 and cysteine 266–cysteine 284. Histidine 308 provides a ligand contact to Zn(2+). Glutamate 309 is a catalytic residue. 2 residues coordinate Zn(2+): histidine 312 and aspartate 323.

It belongs to the peptidase M35 family. Zn(2+) is required as a cofactor.

The protein resides in the secreted. It carries out the reaction Preferential cleavage of bonds with hydrophobic residues in P1'. Also 3-Asn-|-Gln-4 and 8-Gly-|-Ser-9 bonds in insulin B chain.. Secreted metalloproteinase that allows assimilation of proteinaceous substrates. Shows high activities on basic nuclear substrates such as histone and protamine. May be involved in virulence. In Coccidioides posadasii (strain C735) (Valley fever fungus), this protein is Neutral protease 2 homolog MEP5 (MEP5).